The following is a 399-amino-acid chain: Zona occludens toxin (399 aa).

Functionally, increases the permeability of the small intestine mucosa by affecting the structure of intercellular tight junctions (zonula occludens). This Vibrio cholerae serotype O1 (strain ATCC 39315 / El Tor Inaba N16961) protein is Zona occludens toxin (zot).